Reading from the N-terminus, the 103-residue chain is Small ribosomal subunit protein uS10 (103 aa).

Belongs to the universal ribosomal protein uS10 family. As to quaternary structure, part of the 30S ribosomal subunit.

Involved in the binding of tRNA to the ribosomes. The sequence is that of Small ribosomal subunit protein uS10 from Chlorobium luteolum (strain DSM 273 / BCRC 81028 / 2530) (Pelodictyon luteolum).